A 1134-amino-acid chain; its full sequence is Tyrosine-protein kinase receptor Tie-1 (1134 aa).

An N-terminal signal peptide occupies residues 1 to 22; sequence MVWWGSSLLLPTLFLASHVGAS. Residues 23–755 are Extracellular-facing; it reads VDLTLLANLR…SRAAEEGLDQ (733 aa). The region spanning 43–123 is the Ig-like C2-type 1 domain; that stretch reads CVSGEAGAGR…VLYVHNSPGA (81 aa). N81 and N159 each carry an N-linked (GlcNAc...) asparagine glycan. EGF-like domains lie at 212–254, 256–301, and 303–343; these read GCGA…TRCE, ACRE…SQCQ, and ACAP…VHCE. Intrachain disulfides connect C226–C235, C229–C242, C244–C253, C266–C276, C270–C289, C291–C300, C313–C325, C319–C331, and C333–C342. Residues 349–440 form the Ig-like C2-type 2 domain; it reads PQILSMATEV…GQDSRRFKVN (92 aa). Fibronectin type-III domains lie at 444 to 543, 546 to 638, and 642 to 736; these read PPVP…CPEP, QPWL…LPPS, and APRH…LGNG. 3 N-linked (GlcNAc...) asparagine glycosylation sites follow: N501, N592, and N705. The helical transmembrane segment at 756-780 threads the bilayer; it reads QLVLAVVGSVSATCLTILAALLALV. The Cytoplasmic segment spans residues 781–1134; the sequence is CIRRSCLHRR…AGIDATAEEA (354 aa). One can recognise a Protein kinase domain in the interval 835–1114; sequence ITFEDLIGEG…RMLEARKAYV (280 aa). ATP-binding positions include 841 to 849 and K866; that span reads IGEGNFGQV. D975 acts as the Proton acceptor in catalysis. At Y1003 the chain carries Phosphotyrosine; by autocatalysis.

Belongs to the protein kinase superfamily. Tyr protein kinase family. Tie subfamily. Heterodimer with TEK/TIE2. Interacts with SVEP1 (via C-terminus). Phosphorylated on tyrosine residues in response to ANGPT1, most likely by TEK/TIE2. Specifically expressed in developing vascular endothelial cells. Abundantly expressed in lung and heart, moderately in brain, liver and kidney, and weakly in thymus, spleen and testis.

Its subcellular location is the cell membrane. It catalyses the reaction L-tyrosyl-[protein] + ATP = O-phospho-L-tyrosyl-[protein] + ADP + H(+). Functionally, transmembrane tyrosine-protein kinase that may modulate TEK/TIE2 activity and contribute to the regulation of angiogenesis. This chain is Tyrosine-protein kinase receptor Tie-1 (Tie1), found in Mus musculus (Mouse).